The sequence spans 226 residues: NAD(P)H-hydrate epimerase (226 aa).

The YjeF N-terminal domain maps to 10 to 215 (AIELDLDLFE…ALQRKYQLNL (206 aa)). (6S)-NADPHX is bound at residue 58 to 62 (NNGGD). The K(+) site is built by Asn-59 and Asp-123. Residues 127 to 133 (GFGFKPP) and Asp-156 contribute to the (6S)-NADPHX site. Residue Ser-159 participates in K(+) binding.

This sequence belongs to the NnrE/AIBP family. The cofactor is K(+).

It catalyses the reaction (6R)-NADHX = (6S)-NADHX. The catalysed reaction is (6R)-NADPHX = (6S)-NADPHX. Its function is as follows. Catalyzes the epimerization of the S- and R-forms of NAD(P)HX, a damaged form of NAD(P)H that is a result of enzymatic or heat-dependent hydration. This is a prerequisite for the S-specific NAD(P)H-hydrate dehydratase to allow the repair of both epimers of NAD(P)HX. The protein is NAD(P)H-hydrate epimerase of Drosophila pseudoobscura pseudoobscura (Fruit fly).